A 209-amino-acid polypeptide reads, in one-letter code: Ribosomal RNA large subunit methyltransferase E (209 aa).

The S-adenosyl-L-methionine site is built by Gly-63, Trp-65, Asp-83, Asp-99, and Asp-124. The Proton acceptor role is filled by Lys-164.

Belongs to the class I-like SAM-binding methyltransferase superfamily. RNA methyltransferase RlmE family.

The protein localises to the cytoplasm. The catalysed reaction is uridine(2552) in 23S rRNA + S-adenosyl-L-methionine = 2'-O-methyluridine(2552) in 23S rRNA + S-adenosyl-L-homocysteine + H(+). Functionally, specifically methylates the uridine in position 2552 of 23S rRNA at the 2'-O position of the ribose in the fully assembled 50S ribosomal subunit. The sequence is that of Ribosomal RNA large subunit methyltransferase E from Shigella dysenteriae serotype 1 (strain Sd197).